The following is a 426-amino-acid chain: Serine--tRNA ligase (426 aa).

The span at 41–60 shows a compositional bias: polar residues; the sequence is QTRTEQLQAERNARSKSIGQ. The segment at 41–64 is disordered; it reads QTRTEQLQAERNARSKSIGQAKQR. An L-serine-binding site is contributed by 233–235; sequence TAE. 264–266 lines the ATP pocket; sequence RSE. Residue E287 coordinates L-serine. 351–354 provides a ligand contact to ATP; that stretch reads EISS. Position 387 (S387) interacts with L-serine.

Belongs to the class-II aminoacyl-tRNA synthetase family. Type-1 seryl-tRNA synthetase subfamily. Homodimer. The tRNA molecule binds across the dimer.

It is found in the cytoplasm. It carries out the reaction tRNA(Ser) + L-serine + ATP = L-seryl-tRNA(Ser) + AMP + diphosphate + H(+). The enzyme catalyses tRNA(Sec) + L-serine + ATP = L-seryl-tRNA(Sec) + AMP + diphosphate + H(+). It participates in aminoacyl-tRNA biosynthesis; selenocysteinyl-tRNA(Sec) biosynthesis; L-seryl-tRNA(Sec) from L-serine and tRNA(Sec): step 1/1. Functionally, catalyzes the attachment of serine to tRNA(Ser). Is also able to aminoacylate tRNA(Sec) with serine, to form the misacylated tRNA L-seryl-tRNA(Sec), which will be further converted into selenocysteinyl-tRNA(Sec). This Pseudomonas fluorescens (strain ATCC BAA-477 / NRRL B-23932 / Pf-5) protein is Serine--tRNA ligase.